The primary structure comprises 338 residues: DNA-directed RNA polymerase subunit alpha (338 aa).

The segment at methionine 1 to glutamate 234 is alpha N-terminal domain (alpha-NTD). Positions phenylalanine 250–phenylalanine 338 are alpha C-terminal domain (alpha-CTD).

It belongs to the RNA polymerase alpha chain family. Homodimer. The RNAP catalytic core consists of 2 alpha, 1 beta, 1 beta' and 1 omega subunit. When a sigma factor is associated with the core the holoenzyme is formed, which can initiate transcription.

The enzyme catalyses RNA(n) + a ribonucleoside 5'-triphosphate = RNA(n+1) + diphosphate. Its function is as follows. DNA-dependent RNA polymerase catalyzes the transcription of DNA into RNA using the four ribonucleoside triphosphates as substrates. The chain is DNA-directed RNA polymerase subunit alpha from Cereibacter sphaeroides (strain ATCC 17025 / ATH 2.4.3) (Rhodobacter sphaeroides).